A 92-amino-acid chain; its full sequence is Small ribosomal subunit protein uS19 (92 aa).

It belongs to the universal ribosomal protein uS19 family.

Functionally, protein S19 forms a complex with S13 that binds strongly to the 16S ribosomal RNA. The chain is Small ribosomal subunit protein uS19 from Aliivibrio salmonicida (strain LFI1238) (Vibrio salmonicida (strain LFI1238)).